A 635-amino-acid chain; its full sequence is Biosynthetic arginine decarboxylase (635 aa).

Residue Lys-100 is modified to N6-(pyridoxal phosphate)lysine. Residue 282-292 (VDIGGGLGVDY) participates in substrate binding.

Belongs to the Orn/Lys/Arg decarboxylase class-II family. SpeA subfamily. Mg(2+) serves as cofactor. It depends on pyridoxal 5'-phosphate as a cofactor.

It carries out the reaction L-arginine + H(+) = agmatine + CO2. It functions in the pathway amine and polyamine biosynthesis; agmatine biosynthesis; agmatine from L-arginine: step 1/1. Functionally, catalyzes the biosynthesis of agmatine from arginine. The polypeptide is Biosynthetic arginine decarboxylase (Geotalea daltonii (strain DSM 22248 / JCM 15807 / FRC-32) (Geobacter daltonii)).